Consider the following 230-residue polypeptide: Orotidine 5'-phosphate decarboxylase (230 aa).

Substrate is bound by residues Asp-11, Lys-34, 61–70 (DLKLHDIPNT), Thr-117, Arg-179, Gln-188, Gly-208, and Arg-209. Lys-63 functions as the Proton donor in the catalytic mechanism.

The protein belongs to the OMP decarboxylase family. Type 1 subfamily. In terms of assembly, homodimer.

It catalyses the reaction orotidine 5'-phosphate + H(+) = UMP + CO2. It participates in pyrimidine metabolism; UMP biosynthesis via de novo pathway; UMP from orotate: step 2/2. In terms of biological role, catalyzes the decarboxylation of orotidine 5'-monophosphate (OMP) to uridine 5'-monophosphate (UMP). This is Orotidine 5'-phosphate decarboxylase from Streptococcus uberis (strain ATCC BAA-854 / 0140J).